Consider the following 501-residue polypeptide: GMP synthase [glutamine-hydrolyzing] (501 aa).

Positions 1–185 constitute a Glutamine amidotransferase type-1 domain; the sequence is MVLVVDYGSQ…LFNVCKLEKN (185 aa). Cys-75 functions as the Nucleophile in the catalytic mechanism. Catalysis depends on residues His-159 and Glu-161. The GMPS ATP-PPase domain occupies 186-376; that stretch reads WKIGDLVEEK…LGIPDRIINR (191 aa). 213–219 is an ATP binding site; the sequence is SGGVDSS.

In terms of assembly, homodimer.

The catalysed reaction is XMP + L-glutamine + ATP + H2O = GMP + L-glutamate + AMP + diphosphate + 2 H(+). Its pathway is purine metabolism; GMP biosynthesis; GMP from XMP (L-Gln route): step 1/1. In terms of biological role, catalyzes the synthesis of GMP from XMP. This chain is GMP synthase [glutamine-hydrolyzing], found in Thermotoga petrophila (strain ATCC BAA-488 / DSM 13995 / JCM 10881 / RKU-1).